Consider the following 707-residue polypeptide: Anti-sigma-I factor RsgI9 (707 aa).

Topologically, residues 1 to 149 (MKITGVIVRI…NFSRISNIKN (149 aa)) are cytoplasmic. Residues 3-50 (ITGVIVRIHKDRAIIRTDDNRLLAVKRHNDMMVGQIVSFDANEVHKVE) form the RsgI N-terminal anti-sigma domain. A helical membrane pass occupies residues 150 to 172 (FSRIASIAAAFVLIFLFGRNVML). At 173–707 (NNSSDSEYAY…DSEEKKEYIQ (535 aa)) the chain is on the extracellular side. Residues 256–283 (NDKNKKTRDKREEKIDELKETIEQGIEA) are a coiled coil. A disordered region spans residues 345-392 (EDNTELAPTPTPVPPETPEPTPTPTASEATPSNSPVESKSPEAVPELG). Positions 353-367 (TPTPVPPETPEPTPT) are enriched in pro residues. The segment covering 368–379 (PTASEATPSNSP) has biased composition (low complexity).

The protein resides in the cell membrane. The chain is Anti-sigma-I factor RsgI9 from Acetivibrio thermocellus (strain ATCC 27405 / DSM 1237 / JCM 9322 / NBRC 103400 / NCIMB 10682 / NRRL B-4536 / VPI 7372) (Clostridium thermocellum).